A 68-amino-acid polypeptide reads, in one-letter code: Pantinin-3 (68 aa).

Positions 1-23 are cleaved as a signal peptide; that stretch reads MKTQFAILLIALVLFQLLSQSDA. Leucine 36 carries the leucine amide modification. A propeptide spanning residues 40–68 is cleaved from the precursor; sequence GLNELDNLDELFDGEISQADIDFLKELMS.

It belongs to the non-disulfide-bridged peptide (NDBP) superfamily. Short antimicrobial peptide (group 4) family. In terms of tissue distribution, expressed by the venom gland.

The protein resides in the secreted. It localises to the target cell membrane. Functionally, amphipathic peptide that possesses relatively strong activities against Gram-positive bacteria and a fungus, but has very weak antimicrobial activities against Gram-negative bacteria. Also exhibits mild hemolytic activities against human erythrocytes (16 uM induce 70% of hemolysis). Furthermore, this peptide potently inhibits the growth of vancomycin-resistant Enterococcus (VRE) S13, a pathogen that can cause a number of human infections. Minimal inhibitory concentration (MIC) are the following: 16 uM against S.aureus, 6 uM against B.magaterium, 8 uM against M.luteus, 4 uM against VRE, 12 uM against methicillin-resistant S.aureus, 36 uM against E.coli, &gt;87 uM against P.putida, 87 uM against K.oxytoca, &gt;87 uM against E.cloacae, 84 uM against S.enterica and 17 uM against the fungus C.tropicalis. The polypeptide is Pantinin-3 (Pandinus imperator (Emperor scorpion)).